The following is a 501-amino-acid chain: Glutamyl-tRNA(Gln) amidotransferase subunit A (501 aa).

Active-site charge relay system residues include Lys80 and Ser155. Ser179 (acyl-ester intermediate) is an active-site residue.

This sequence belongs to the amidase family. GatA subfamily. In terms of assembly, heterotrimer of A, B and C subunits.

It carries out the reaction L-glutamyl-tRNA(Gln) + L-glutamine + ATP + H2O = L-glutaminyl-tRNA(Gln) + L-glutamate + ADP + phosphate + H(+). Allows the formation of correctly charged Gln-tRNA(Gln) through the transamidation of misacylated Glu-tRNA(Gln) in organisms which lack glutaminyl-tRNA synthetase. The reaction takes place in the presence of glutamine and ATP through an activated gamma-phospho-Glu-tRNA(Gln). This chain is Glutamyl-tRNA(Gln) amidotransferase subunit A, found in Cupriavidus necator (strain ATCC 17699 / DSM 428 / KCTC 22496 / NCIMB 10442 / H16 / Stanier 337) (Ralstonia eutropha).